Reading from the N-terminus, the 772-residue chain is Calcium-binding mitochondrial carrier protein (772 aa).

The interval 1–377 (MFANRVRQAQ…SISDFEKSTG (377 aa)) is N-terminal domain. 4 EF-hand domains span residues 132 to 165 (LDADKFKVLFQMADVDHTGYISFDEYVMFDELMA), 166 to 201 (KPEAEYFLAFKLFDRDGNGYISKNDFKHVITASLDP), 235 to 270 (LQQERIKQEFKFHDKYNSGYIPRDKFAKVLGSVKLR), and 347 to 382 (ITPLEIDLIFHLFDLNKDGKLSISDFEKSTGLNINK). Ca(2+) is bound by residues Asp-145, Asp-147, Thr-149, Tyr-151, Glu-156, Asp-179, Asp-181, Asn-183, Tyr-185, and Asp-190. Asp-360, Asn-362, Asp-364, Lys-366, and Asp-371 together coordinate Ca(2+). A linker loop domain region spans residues 378–422 (LNINKIGGGTNYSDSYPSDSHVTIQNSSTTPSPSTPITNTAAAIA). Positions 432–720 (AQQVLESIEN…KALLPDAEYK (289 aa)) are carrier domain. Solcar repeat units lie at residues 436–526 (LESI…LRDL), 535–616 (IYFP…MKTI), and 624–712 (LGPM…LQKA). 6 helical membrane passes run 442 to 459 (FALGSIAGGIGAAAVYPI), 501 to 520 (GILPQMVGVAPEKAIKLTVN), 545 to 558 (GFAGMSQVCVTNPL), 591 to 610 (GAGACLLRDIPFSAIYFPTY), 630 to 647 (LLAGAVAGIPAASLVTPA), and 687 to 706 (GALARVFRSSPQFGVTLVSY). The C-terminal domain stretch occupies residues 721–772 (PPTNAPITQKDFDVIRGNTNTVQRVIDMESKFGTLHQTRDNNKSSNGGENKN). The interval 751-772 (KFGTLHQTRDNNKSSNGGENKN) is disordered. Positions 763–772 (KSSNGGENKN) are enriched in low complexity.

The protein belongs to the mitochondrial carrier (TC 2.A.29) family. In terms of assembly, homodimer (via N-terminus).

It localises to the mitochondrion inner membrane. Functionally, mitochondrial and calcium-binding carrier that catalyzes the calcium-dependent exchange of cytoplasmic glutamate with mitochondrial aspartate across the mitochondrial inner membrane. The chain is Calcium-binding mitochondrial carrier protein (mcfO) from Dictyostelium discoideum (Social amoeba).